A 330-amino-acid polypeptide reads, in one-letter code: Sulfate/thiosulfate import ATP-binding protein CysA (330 aa).

In terms of domain architecture, ABC transporter spans isoleucine 3–leucine 237. An ATP-binding site is contributed by glycine 35–threonine 42.

This sequence belongs to the ABC transporter superfamily. Sulfate/tungstate importer (TC 3.A.1.6) family. As to quaternary structure, the complex is composed of two ATP-binding proteins (CysA), two transmembrane proteins (CysT and CysW) and a solute-binding protein (CysP).

It localises to the cell inner membrane. The enzyme catalyses sulfate(out) + ATP + H2O = sulfate(in) + ADP + phosphate + H(+). It catalyses the reaction thiosulfate(out) + ATP + H2O = thiosulfate(in) + ADP + phosphate + H(+). Its function is as follows. Part of the ABC transporter complex CysAWTP involved in sulfate/thiosulfate import. Responsible for energy coupling to the transport system. The chain is Sulfate/thiosulfate import ATP-binding protein CysA from Pectobacterium atrosepticum (strain SCRI 1043 / ATCC BAA-672) (Erwinia carotovora subsp. atroseptica).